Here is a 70-residue protein sequence, read N- to C-terminus: Basic phospholipase A2 2 (70 aa).

An intrachain disulfide couples Cys28 to Cys44. The active site involves His47. A Ca(2+)-binding site is contributed by Asp48.

Belongs to the phospholipase A2 family. Group II subfamily. D49 sub-subfamily. Ca(2+) serves as cofactor. In terms of tissue distribution, expressed by the venom gland.

It localises to the secreted. It catalyses the reaction a 1,2-diacyl-sn-glycero-3-phosphocholine + H2O = a 1-acyl-sn-glycero-3-phosphocholine + a fatty acid + H(+). Its function is as follows. Snake venom phospholipase A2 (PLA2) that exhibits strong myotoxicity. PLA2 catalyzes the calcium-dependent hydrolysis of the 2-acyl groups in 3-sn-phosphoglycerides. The protein is Basic phospholipase A2 2 of Trimeresurus stejnegeri (Chinese green tree viper).